The primary structure comprises 121 residues: Large ribosomal subunit protein uL22 (121 aa).

It belongs to the universal ribosomal protein uL22 family. In terms of assembly, part of the 50S ribosomal subunit.

This protein binds specifically to 23S rRNA; its binding is stimulated by other ribosomal proteins, e.g. L4, L17, and L20. It is important during the early stages of 50S assembly. It makes multiple contacts with different domains of the 23S rRNA in the assembled 50S subunit and ribosome. Functionally, the globular domain of the protein is located near the polypeptide exit tunnel on the outside of the subunit, while an extended beta-hairpin is found that lines the wall of the exit tunnel in the center of the 70S ribosome. This chain is Large ribosomal subunit protein uL22, found in Pseudarthrobacter chlorophenolicus (strain ATCC 700700 / DSM 12829 / CIP 107037 / JCM 12360 / KCTC 9906 / NCIMB 13794 / A6) (Arthrobacter chlorophenolicus).